The sequence spans 101 residues: Small ribosomal subunit protein uS14 (101 aa).

This sequence belongs to the universal ribosomal protein uS14 family. Part of the 30S ribosomal subunit. Contacts proteins S3 and S10.

Functionally, binds 16S rRNA, required for the assembly of 30S particles and may also be responsible for determining the conformation of the 16S rRNA at the A site. The polypeptide is Small ribosomal subunit protein uS14 (Ectopseudomonas mendocina (strain ymp) (Pseudomonas mendocina)).